An 826-amino-acid chain; its full sequence is DEAD-box ATP-dependent RNA helicase 13 (826 aa).

Residues methionine 1–leucine 10 show a composition bias toward basic and acidic residues. 2 disordered regions span residues methionine 1 to glycine 62 and histidine 76 to threonine 175. A compositionally biased stretch (basic residues) spans methionine 11–lysine 22. Over residues serine 49–glycine 58 the composition is skewed to polar residues. A compositionally biased stretch (acidic residues) spans glutamate 94–glutamate 128. Positions glutamate 125–serine 166 form a coiled coil. Residues lysine 133–lysine 154 are compositionally biased toward basic residues. The short motif at serine 190–lysine 218 is the Q motif element. The Helicase ATP-binding domain occupies asparagine 222–lysine 439. Alanine 235–threonine 242 lines the ATP pocket. The short motif at aspartate 363–aspartate 366 is the DEAD box element. The 169-residue stretch at lysine 476–tyrosine 644 folds into the Helicase C-terminal domain. Coiled coils occupy residues leucine 666–serine 712 and lysine 783–arginine 810. Positions lysine 783–serine 826 are disordered. Composition is skewed to basic and acidic residues over residues serine 788–serine 797 and glutamate 804–arginine 814. The span at asparagine 815 to serine 826 shows a compositional bias: basic residues.

The protein belongs to the DEAD box helicase family. DDX24/MAK5 subfamily.

The enzyme catalyses ATP + H2O = ADP + phosphate + H(+). The protein is DEAD-box ATP-dependent RNA helicase 13 (RH13) of Arabidopsis thaliana (Mouse-ear cress).